Reading from the N-terminus, the 600-residue chain is NADH-quinone oxidoreductase subunit C/D (600 aa).

Residues 1–190 (MVNNMTDLTA…SPFELTKAKQ (190 aa)) form an NADH dehydrogenase I subunit C region. Residues 214-600 (DFMFLNLGPN…IDFVMSDVDR (387 aa)) form an NADH dehydrogenase I subunit D region.

The protein in the N-terminal section; belongs to the complex I 30 kDa subunit family. In the C-terminal section; belongs to the complex I 49 kDa subunit family. As to quaternary structure, NDH-1 is composed of 13 different subunits. Subunits NuoB, CD, E, F, and G constitute the peripheral sector of the complex.

It localises to the cell inner membrane. The catalysed reaction is a quinone + NADH + 5 H(+)(in) = a quinol + NAD(+) + 4 H(+)(out). Functionally, NDH-1 shuttles electrons from NADH, via FMN and iron-sulfur (Fe-S) centers, to quinones in the respiratory chain. The immediate electron acceptor for the enzyme in this species is believed to be ubiquinone. Couples the redox reaction to proton translocation (for every two electrons transferred, four hydrogen ions are translocated across the cytoplasmic membrane), and thus conserves the redox energy in a proton gradient. This Shigella boydii serotype 18 (strain CDC 3083-94 / BS512) protein is NADH-quinone oxidoreductase subunit C/D.